Consider the following 465-residue polypeptide: Tetratricopeptide repeat protein 38 (465 aa).

TPR repeat units lie at residues Arg104–Asp137, Ser176–Asp209, and Cys248–Ala281.

This sequence belongs to the TTC38 family.

This is Tetratricopeptide repeat protein 38 (Ttc38) from Mus musculus (Mouse).